The following is a 647-amino-acid chain: Zinc finger CCCH domain-containing protein 19 (647 aa).

2 C3H1-type zinc fingers span residues 16–45 (RRRSTDCIYFLASPLTCKKGSECEYRHSDA) and 47–73 (RMNPRDCWYWFNGNCANPKCSFRHPPL). Residues 78-106 (GAPTTPRTSQQSAPQVSVPAQAPVPNPAS) are disordered. Low complexity predominate over residues 86–106 (SQQSAPQVSVPAQAPVPNPAS). The C3H1-type 3 zinc-finger motif lies at 109–136 (AKQGVPCYYFQKGMCVKGDRCAFLHLPQ). Disordered regions lie at residues 155–280 (VPHP…RTNG), 308–327 (LSESRFSQREPMPLTADSSD), 335–452 (QRRL…DAES), 512–580 (LKRK…LSPA), and 586–605 (EAADDASRELEEQQDVETAE). Composition is skewed to polar residues over residues 160–175 (LKNSWTKPNSSAQQNA) and 189–203 (NGKTAQKQNLTNRAG). Residues 267 to 280 (SLREDRGAYRRTNG) are compositionally biased toward basic and acidic residues. The span at 347–359 (SDRHNVYPEDERH) shows a compositional bias: basic and acidic residues. Positions 369–379 (QASNDGVSSSR) are enriched in polar residues. Residues 419-433 (LRGKLHDRLKAKPNE) show a composition bias toward basic and acidic residues. The segment covering 435-445 (VSGNVQSSLSK) has biased composition (polar residues). The span at 527–536 (GSKREEHSGG) shows a compositional bias: basic and acidic residues.

This chain is Zinc finger CCCH domain-containing protein 19, found in Oryza sativa subsp. japonica (Rice).